We begin with the raw amino-acid sequence, 562 residues long: MSGSYGGGGYGGRGGGGGGYSNGYDRNGGGYSNNYSSHGGSNGYGGGGGGYGGGGGGYGGGGYGGGGGGDRMSALGAGLQKQNWDMSALPKFEKSFYQEHPSVANRSPAEVDKFRADHSIAVFGNNVPKPVETFDEAGFPRYVMDEVKAQGFPAPTAIQSQGWPMALSGRDVVGIAETGSGKTLTYCLPAIVHINAQPLLAPGDGPIVLILAPTRELAVQIQQEISKFGKSSRIRNTCVYGGVPKGPQIRDLSRGVEVCIATPGRLIDMLESGKTNLRRVTYLVLDEADRMLDMGFEPQIRKIIGQIRPDRQTLMWSATWPKEVRNLAADFLTDFIQVNIGSMDLAANHRITQIVEVVSESEKRDRMIKHLEKIMEGRENQNKILIFTGTKRVADDITRFLRQDGWPALSIHGDKQQNERDWVLDQFKTGKSPIMVATDVASRGIDVRNITHVLNYDYPNNSEDYIHRIGRTGRAGAKGTAITFFTTDNSKQARELVGVLQEAKQQIDPRLAEMARYSGGGGGRFGGYRGRGGGGWRGGRGGGGGGGSVGGANALPLNNRRW.

The short motif at glutamate 132–serine 160 is the Q motif element. The region spanning tryptophan 163–valine 338 is the Helicase ATP-binding domain. Alanine 176–threonine 183 serves as a coordination point for ATP. A DEAD box motif is present at residues aspartate 286–aspartate 289. In terms of domain architecture, Helicase C-terminal spans histidine 370–alanine 515. An RNA-binding RGG-box region spans residues glycine 526 to serine 548. Positions tryptophan 536–glycine 550 are enriched in gly residues. Residues tryptophan 536 to tryptophan 562 are disordered.

It belongs to the DEAD box helicase family. DDX5/DBP2 subfamily. Associates with polysomes.

The protein resides in the cytoplasm. Its subcellular location is the nucleus. It carries out the reaction ATP + H2O = ADP + phosphate + H(+). Its function is as follows. ATP-dependent RNA helicase involved nonsense-mediated mRNA decay and ribosome biogenesis through rRNA processing. The sequence is that of ATP-dependent RNA helicase dbp2 (drh-1) from Neurospora crassa (strain ATCC 24698 / 74-OR23-1A / CBS 708.71 / DSM 1257 / FGSC 987).